The following is a 517-amino-acid chain: MDIIGGQHLRQMWDDLADVYGHKTALICESSGGVVNRYSYLELNQEINRTANLFYTLGIRKGDKVALHLDNCPEFIFCWFGLAKIGAIMVPINARLLREESAWILQNSQACLLVTSAQFYPMYQQIQQEDATQLRHICLTDVALPADDGVSSFTQLKNQQPATLCYAPPLSTDDTAEILFTSGTTSRPKGVVITHYNLRFAGYYSAWQCALRDDDVYLTVMPAFHIDCQCTAAMAAFSAGATFVLVEKYSARAFWGQAQKYRATITECIPMMIRTLMVQPPSANDRQHRLREVMFYLNLSEQEKDAFCERFGVRLLTSYGMTETIVGIIGDRPGDKRRWPSIGRAGFCYEAEIRDDHNRPLPAGEIGEICIKGVPGKTIFKEYFLNPKATAKVLEADGWLHTGDTGYCDEEGFFYFVDRRCNMIKRGGENVSCVELENIIATHPKIQDIVVVGIKDSIRDEAIKAFVVLNEGETLSEEEFFRFCEQNMAKFKVPSYLEIRKDLPRNCSGKIIRKNLK.

This sequence belongs to the ATP-dependent AMP-binding enzyme family.

The catalysed reaction is 4-(trimethylamino)butanoate + ATP + CoA = 4-(trimethylamino)butanoyl-CoA + AMP + diphosphate. It carries out the reaction crotonobetaine + ATP + CoA = crotonobetainyl-CoA + AMP + diphosphate. The enzyme catalyses (R)-carnitine + ATP + CoA = (R)-carnitinyl-CoA + AMP + diphosphate. It functions in the pathway amine and polyamine metabolism; carnitine metabolism. Functionally, catalyzes the transfer of CoA to carnitine, generating the initial carnitinyl-CoA needed for the CaiB reaction cycle. Also has activity toward crotonobetaine and gamma-butyrobetaine. This Escherichia coli O139:H28 (strain E24377A / ETEC) protein is Crotonobetaine/carnitine--CoA ligase.